The following is a 134-amino-acid chain: RxLR effector protein Avh238 (134 aa).

A signal peptide spans 1 to 21; the sequence is MRGVFFVAVAVAIFARSSAEA. A RxLR-dEER motif is present at residues 44–68; it reads RFLRVADPEDDDLAAPADDGKTEER. The disordered stretch occupies residues 49–70; sequence ADPEDDDLAAPADDGKTEERAP. A compositionally biased stretch (basic and acidic residues) spans 61-70; sequence DDGKTEERAP.

It belongs to the RxLR effector family. In terms of assembly, interacts with host 1-aminocyclopropane-1-carboxylate synthases ACS1, ACS2, ACS3, ACS10 and ACS12.

The protein localises to the secreted. The protein resides in the host cytoplasm. It is found in the host nucleus. Effector that suppresses plant defense responses during the early stages of pathogen infection. Suppresses cell death induced by effectors and PAMPs in plant hosts. Is able to induced cell death in tomato, tobacco, eggplant, and potato, but not in A.thaliana. Interacts with and destabilizes host 1-aminocyclopropane-1-carboxylate synthases. By suppressing type2 ACS-catalyzed ethylene biosynthesis, Avh238 facilitates Phytophthora infection. This Phytophthora sojae (strain P6497) (Soybean stem and root rot agent) protein is RxLR effector protein Avh238 (Avh238).